Here is a 56-residue protein sequence, read N- to C-terminus: Botcinic acid biosynthesis cluster B protein 14 (56 aa).

Its pathway is polyketide biosynthesis. Its function is as follows. Part of the gene cluster B that mediates the biosynthesis of botcinic acid and its botcinin derivatives, acetate-derived polyketides that contribute to virulence when combined with the sesquiterpene botrydial. Botcinic acid and its derivatives have been shown to induce chlorosis and necrosis during host plant infection, but also have antifungal activities. Two polyketide synthases, BOA6 and BOA9, are involved in the biosynthesis of botcinins. BOA6 mediates the formation of the per-methylated tetraketide core by condensation of four units of malonyl-CoA with one unit of acetyl-CoA, which would be methylated in activated methylene groups to yield a bicyclic acid intermediate that could then either be converted to botrylactone derivatives or lose the starter acetate unit through a retro-Claisen type C-C bond cleavage to yield botcinin derivatives. The second polyketide synthase, BOA9, is probably required for the biosynthesis of the tetraketide side chain of botcinins. The methyltransferase (MT) domain within BOA6 is probably responsible for the incorporation of four methyl groups. The trans-enoyl reductase BOA5 might take over the enoyl reductase function of BOA6 that misses an ER domain. The monooxygenases BOA2, BOA3 and BOA4 might be involved in further hydroxylations at C4, C5 and C8, whereas BOA7, close to BOA9, could potentially be involved in the hydroxylation at C4 in the side chain of botcinins. In Botryotinia fuckeliana (strain B05.10) (Noble rot fungus), this protein is Botcinic acid biosynthesis cluster B protein 14.